Consider the following 335-residue polypeptide: DNA-directed RNA polymerase subunit alpha (335 aa).

An alpha N-terminal domain (alpha-NTD) region spans residues 1–231 (MVREKVTVST…DLFIPFLHME (231 aa)). Residues 262–335 (KKKLSLESIF…FALDLPKNLN (74 aa)) form an alpha C-terminal domain (alpha-CTD) region.

It belongs to the RNA polymerase alpha chain family. As to quaternary structure, in plastids the minimal PEP RNA polymerase catalytic core is composed of four subunits: alpha, beta, beta', and beta''. When a (nuclear-encoded) sigma factor is associated with the core the holoenzyme is formed, which can initiate transcription.

The protein resides in the plastid. It catalyses the reaction RNA(n) + a ribonucleoside 5'-triphosphate = RNA(n+1) + diphosphate. Its function is as follows. DNA-dependent RNA polymerase catalyzes the transcription of DNA into RNA using the four ribonucleoside triphosphates as substrates. The chain is DNA-directed RNA polymerase subunit alpha from Cuscuta reflexa (Southern Asian dodder).